Reading from the N-terminus, the 326-residue chain is G-protein coupled receptor 171 (326 aa).

Residues 1 to 19 (MTNSSMFCPIYRDLEPFTY) lie on the Extracellular side of the membrane. The helical transmembrane segment at 20-40 (FFYLVYLIGIIGSCFATWAFI) threads the bilayer. The Cytoplasmic segment spans residues 41–48 (QKSTNHRC). The helical transmembrane segment at 49-69 (VSIYLINLLTADFLLTLALPV) threads the bilayer. Over 70-89 (KIVVDLGVAPWKLRIFHCQV) the chain is Extracellular. The cysteines at positions 87 and 165 are disulfide-linked. The chain crosses the membrane as a helical span at residues 90–110 (TACLIYINMYLSIIFLAFVSI). Residues 111-133 (DRCLQLVHSCKIYRIQEPGFAKM) lie on the Cytoplasmic side of the membrane. A helical transmembrane segment spans residues 134-154 (ISAVVWLMVLLIMVPNMVIPI). At 155–182 (KNIKEKSNVGCMEFKREFGKNWHLLTNF) the chain is on the extracellular side. The chain crosses the membrane as a helical span at residues 183 to 203 (ICVAIFLNFSAIILISNFLVI). At 204-221 (RQLYRNRDNANYPSVKSA) the chain is on the cytoplasmic side. Residues 222-242 (LLNILLVTASYIICFVPYHAV) form a helical membrane-spanning segment. Residues 243–268 (RIPYTLSQTEVISDCSTRIALFKAKE) are Extracellular-facing. A helical membrane pass occupies residues 269 to 289 (ATLLLAVSNLCFDPILYYHLS). The Cytoplasmic portion of the chain corresponds to 290 to 326 (KAFRLKVTETFASPQKMKAREEKPRRENDVQSTGSAC). The interval 305–326 (KMKAREEKPRRENDVQSTGSAC) is disordered. Over residues 307–318 (KAREEKPRREND) the composition is skewed to basic and acidic residues.

It belongs to the G-protein coupled receptor 1 family.

The protein resides in the cell membrane. In terms of biological role, G-protein coupled receptor for Big LEN, a 16-amino acid neuropeptide produced from the precursor protein, proSAAS (encoded by PCSK1N). Acts through a G(i)-alpha-mediated pathway in response to Big LEN. Big LEN-GPR171 system plays an important role in regulating feeding and metabolism. Also plays a role in modulating fear and anxiety-like behaviors in the basolateral amygdala. Big LEN-GPR171 modulates the mu-type opioid receptor signaling and antinociception. Acts as a negative regulator T cell function. The sequence is that of G-protein coupled receptor 171 from Rattus norvegicus (Rat).